Reading from the N-terminus, the 602-residue chain is Toxin YwqJ (602 aa).

The LXG domain maps to 1–235 (MSKVFESKSL…TTYIDAKTQQ (235 aa)). Coiled-coil stretches lie at residues 6–41 (ESKS…VADL) and 227–251 (TYID…EANK).

In the N-terminal section; belongs to the LXG family. As to quaternary structure, probably interacts with cognate immunity protein YwqK but not with non-cognate immunity proteins. The interaction inhibits the toxic activity of YwqJ.

The protein localises to the secreted. Its function is as follows. Toxic component of one of 6 LXG toxin-immunity modules in this strain. They promote kin selection, mediate competition in biofilms, and drive spatial segregation of different strains, indicating that LXG toxins may help avoid warfare between strains in biofilms. Mediates intercellular competition during biofilm formation; disruption of the operon disadvantages the bacteria, but overexpression of the cognate immunity protein restores growth in competition with wild-type. Overexpression alone in situ causes growth arrest but not cell lysis; no effect is seen on DNA or rRNA. Co-overexpression with cognate immunity protein YwqK does not cause growth arrest. The toxic effect is dependent on the epsA and tapA operons which are required for biofilm formation. Its toxic effects are probably neutralized by its cognate immunity protein YwqK, but not by immunity proteins specific to other toxins with the LXG domain. May have deaminase activity. In Bacillus subtilis (strain 168), this protein is Toxin YwqJ (ywqJ).